We begin with the raw amino-acid sequence, 80 residues long: Raniseptin-1 (80 aa).

An N-terminal signal peptide occupies residues 1 to 22 (MAFLKKSLFLVLFLGIVSLSIC). Positions 23-49 (EEEKREGEEEEKQEEENEELSEEELRE) are excised as a propeptide.

The protein belongs to the frog skin active peptide (FSAP) family. Dermaseptin subfamily. In terms of tissue distribution, expressed by the skin glands.

It is found in the secreted. Its function is as follows. Has antibacterial activity against the Gram-negative bacteria E.coli ATCC 25922 (MIC=5 uM), P.aeruginosa ATCC 27853 (MIC=10 uM) and X.citri (MIC&lt; 2 uM), and the Gram-positive bacterium S.aureus ATCC 29313 (MIC=20 uM). Does not have hemolytic activity against human erythrocytes. The protein is Raniseptin-1 of Boana raniceps (Chaco tree frog).